Reading from the N-terminus, the 158-residue chain is NAD(P)H-quinone oxidoreductase subunit J, chloroplastic (158 aa).

This sequence belongs to the complex I 30 kDa subunit family. NDH is composed of at least 16 different subunits, 5 of which are encoded in the nucleus.

It localises to the plastid. Its subcellular location is the chloroplast thylakoid membrane. It catalyses the reaction a plastoquinone + NADH + (n+1) H(+)(in) = a plastoquinol + NAD(+) + n H(+)(out). It carries out the reaction a plastoquinone + NADPH + (n+1) H(+)(in) = a plastoquinol + NADP(+) + n H(+)(out). In terms of biological role, NDH shuttles electrons from NAD(P)H:plastoquinone, via FMN and iron-sulfur (Fe-S) centers, to quinones in the photosynthetic chain and possibly in a chloroplast respiratory chain. The immediate electron acceptor for the enzyme in this species is believed to be plastoquinone. Couples the redox reaction to proton translocation, and thus conserves the redox energy in a proton gradient. This Aethionema cordifolium (Lebanon stonecress) protein is NAD(P)H-quinone oxidoreductase subunit J, chloroplastic.